The primary structure comprises 220 residues: MHIMEGFLPGIWALVWFVVAIPVISYGALKTARLARNDELNKSHIAVAAAFIFVLSALKIPSVTGSTSHPTGTGIAVVLFGPAVTAFLSAIVLLYQALLLGHGGLTTLGANVVSMGVVGPVAGWVVFRALNPYLDLQKATFAAAVIADWTTYLVTSIQLGVAFPSGPGVAGVVDSIVRFASVFSITQIPIGIVEGALAAGLIGYIAMSRQSIKTRLGVTA.

A run of 6 helical transmembrane segments spans residues 6-26, 45-65, 74-94, 107-127, 153-173, and 188-208; these read GFLP…VISY, IAVA…SVTG, GIAV…IVLL, TLGA…WVVF, LVTS…AGVV, and IPIG…IAMS.

The protein belongs to the CbiM family. As to quaternary structure, forms an energy-coupling factor (ECF) transporter complex composed of an ATP-binding protein (A component, CbiO), a transmembrane protein (T component, CbiQ) and 2 possible substrate-capture proteins (S components, CbiM and CbiN) of unknown stoichimetry.

It is found in the cell membrane. Its pathway is cofactor biosynthesis; adenosylcobalamin biosynthesis. Part of the energy-coupling factor (ECF) transporter complex CbiMNOQ involved in cobalt import. The sequence is that of Putative cobalt transport protein CbiM from Halobacterium salinarum (strain ATCC 29341 / DSM 671 / R1).